We begin with the raw amino-acid sequence, 220 residues long: ATP-dependent Clp protease proteolytic subunit (220 aa).

Residue serine 125 is the Nucleophile of the active site. Histidine 150 is an active-site residue.

It belongs to the peptidase S14 family. In terms of assembly, fourteen ClpP subunits assemble into 2 heptameric rings which stack back to back to give a disk-like structure with a central cavity, resembling the structure of eukaryotic proteasomes.

It is found in the cytoplasm. It catalyses the reaction Hydrolysis of proteins to small peptides in the presence of ATP and magnesium. alpha-casein is the usual test substrate. In the absence of ATP, only oligopeptides shorter than five residues are hydrolyzed (such as succinyl-Leu-Tyr-|-NHMec, and Leu-Tyr-Leu-|-Tyr-Trp, in which cleavage of the -Tyr-|-Leu- and -Tyr-|-Trp bonds also occurs).. Cleaves peptides in various proteins in a process that requires ATP hydrolysis. Has a chymotrypsin-like activity. Plays a major role in the degradation of misfolded proteins. The protein is ATP-dependent Clp protease proteolytic subunit of Bacteroides thetaiotaomicron (strain ATCC 29148 / DSM 2079 / JCM 5827 / CCUG 10774 / NCTC 10582 / VPI-5482 / E50).